Here is a 331-residue protein sequence, read N- to C-terminus: Hyaluronidase B (331 aa).

Intrachain disulfides connect Cys-19/Cys-308 and Cys-185/Cys-197. Residue Asn-79 is glycosylated (N-linked (GlcNAc...) asparagine). Residue Glu-109 is the Proton donor of the active site.

Belongs to the glycosyl hydrolase 56 family. In terms of tissue distribution, expressed by the venom gland.

The protein resides in the secreted. The enzyme catalyses Random hydrolysis of (1-&gt;4)-linkages between N-acetyl-beta-D-glucosamine and D-glucuronate residues in hyaluronate.. Functionally, hydrolyzes high molecular weight hyaluronic acid to produce small oligosaccharides. This chain is Hyaluronidase B, found in Vespa velutina (Asian yellow-legged hornet).